The primary structure comprises 336 residues: uncharacterized protein (336 aa).

2 disordered regions span residues 29 to 93 (GGVS…HSGA) and 116 to 147 (LQERPAASQPWRTASAQKQHGSSQPHQGGVTG). Polar residues-rich tracts occupy residues 70–82 (SGGSCEGLSTSTA) and 125–141 (PWRTASAQKQHGSSQPH).

This is an uncharacterized protein from Bos taurus (Bovine).